A 1736-amino-acid polypeptide reads, in one-letter code: Hybrid signal transduction histidine kinase I (1736 aa).

Residues 143–161 (HNINNNQNNQNSVNINSSN) show a composition bias toward low complexity. The interval 143–171 (HNINNNQNNQNSVNINSSNKGQYNRPEPS) is disordered. One can recognise a PAC domain in the interval 234–286 (FEYPLRINRKNDNLVRYIQLKGEIIKKDDKVFKVLGVCHDFSEIQEAKDKLEE). Positions 287–358 (ESKFVEALIG…QINLEKSGTP (72 aa)) constitute a PAS domain. The segment at 378–469 (TSNQQQSSLS…NTTNGIGGAT (92 aa)) is disordered. A compositionally biased stretch (low complexity) spans 379–389 (SNQQQSSLSKS). The span at 392 to 412 (PRSQSNCSNGNKSQNRLSKNY) shows a compositional bias: polar residues. Residues 413-469 (STTTTTTNNNNNNNNNNNNNNNNNNNNNSISQQQQTQVSTQQTQQQQNTTNGIGGAT) are compositionally biased toward low complexity. One can recognise a Histidine kinase domain in the interval 556-908 (NISHELLSPM…TFHFILSIKS (353 aa)). His-559 is modified (phosphohistidine; by autocatalysis). Disordered regions lie at residues 711-821 (NSKT…KREK), 952-971 (TKKV…TNYG), 1080-1124 (NGNN…KQHS), 1157-1258 (PPKS…ILSP), 1277-1301 (SLTP…INNG), 1330-1393 (ASSP…NLSS), and 1419-1520 (SNNL…PPIL). 2 stretches are compositionally biased toward acidic residues: residues 725–735 (SIDGDYDDQDN) and 758–789 (ELDE…DDDT). Low complexity-rich tracts occupy residues 790–807 (SSNT…FHNN), 961–971 (DNGNNDSTNYG), and 1080–1096 (NGNN…NNNI). The segment covering 1097-1117 (QTPNGLNNSRGSSLISTPSTK) has biased composition (polar residues). 2 stretches are compositionally biased toward low complexity: residues 1186-1195 (SSPPINSSSS) and 1202-1258 (TNGS…ILSP). The span at 1330 to 1339 (ASSPKQSQRG) shows a compositional bias: polar residues. 4 stretches are compositionally biased toward low complexity: residues 1340–1376 (YSPK…QQQQ), 1425–1475 (NNNN…STPE), 1482–1492 (SPRSNNNNNCS), and 1506–1520 (SSTI…PPIL). The Response regulatory domain maps to 1551-1674 (KVLVAEDNTM…LLYEVINTQI (124 aa)). The residue at position 1605 (Asp-1605) is a 4-aspartylphosphate. The segment covering 1695 to 1722 (NNNNNNTNNNNNNNNSSNPVNNNNSNSI) has biased composition (low complexity). The tract at residues 1695 to 1736 (NNNNNNTNNNNNNNNSSNPVNNNNSNSIDATQQELNNEKIRI) is disordered.

Post-translationally, activation probably requires transfer of a phosphate group between a histidine in the kinase core (transmitter) domain and an aspartate of the receiver domain.

It carries out the reaction ATP + protein L-histidine = ADP + protein N-phospho-L-histidine.. Functionally, acts as a receptor histidine kinase for a signal transduction pathway. This protein undergoes an ATP-dependent autophosphorylation at a conserved histidine residue in the kinase core, and a phosphoryl group is then transferred to a conserved aspartate residue in the receiver domain. The chain is Hybrid signal transduction histidine kinase I (dhkI-1) from Dictyostelium discoideum (Social amoeba).